A 367-amino-acid polypeptide reads, in one-letter code: Putative C-&gt;U-editing enzyme APOBEC-4 (367 aa).

The 117-residue stretch at 61-177 (PQTKHLTFYE…AWNREALRSL (117 aa)) folds into the CMP/dCMP-type deaminase domain. Position 93 (histidine 93) interacts with Zn(2+). The active-site Proton donor is glutamate 95. Zn(2+) is bound by residues cysteine 127 and cysteine 134.

Belongs to the cytidine and deoxycytidylate deaminase family. Requires Zn(2+) as cofactor. Predominantly expressed in testis.

In terms of biological role, putative C to U editing enzyme whose physiological substrate is not yet known. This is Putative C-&gt;U-editing enzyme APOBEC-4 (APOBEC4) from Homo sapiens (Human).